A 176-amino-acid chain; its full sequence is RNA pyrophosphohydrolase (176 aa).

The Nudix hydrolase domain occupies 6–149; sequence GYRPNVGIVI…KRDVYRRVMK (144 aa). A Nudix box motif is present at residues 38-59; that stretch reads GGINPGESAEQAMYRELFEEVG.

The protein belongs to the Nudix hydrolase family. RppH subfamily. The cofactor is a divalent metal cation.

Its function is as follows. Accelerates the degradation of transcripts by removing pyrophosphate from the 5'-end of triphosphorylated RNA, leading to a more labile monophosphorylated state that can stimulate subsequent ribonuclease cleavage. The protein is RNA pyrophosphohydrolase of Salmonella arizonae (strain ATCC BAA-731 / CDC346-86 / RSK2980).